A 1544-amino-acid polypeptide reads, in one-letter code: GATOR complex protein Iml1 (1544 aa).

2 disordered regions span residues 615 to 649 and 1037 to 1072; these read QAVP…CENG and RRHS…EKRP. Polar residues-rich tracts occupy residues 623-639 and 1041-1057; these read QAGQ…NNNN and TSII…TNSP. A compositionally biased stretch (basic and acidic residues) spans 1058 to 1072; the sequence is FRERVGSNRLPEKRP.

It belongs to the IML1 family. Component of the GATOR complex consisting of mio, Nup44A/Seh1, Im11, Nplr3, Nplr2, Wdr24, Wdr59 and Sec13. Within the GATOR complex, probable component of the GATOR1 subcomplex which is likely composed of Iml1, Nplr2 and Nplr3.

Its function is as follows. An essential component of the GATOR subcomplex GATOR1 which functions as an inhibitor of the amino acid-sensing branch of the TORC1 signaling pathway. The two GATOR subcomplexes, GATOR1 and GATOR2, regulate the TORC1 pathway in order to mediate metabolic homeostasis, female gametogenesis and the response to amino acid limitation and complete starvation. The function of GATOR1 in negatively regulating the TORC1 pathway is essential for maintaining baseline levels of TORC1 activity under nutrient rich conditions, and for promoting survival during amino acid or complete starvation by inhibiting TORC1-dependent cell growth and promoting catabolic metabolism and autophagy. GATOR1 and GATOR2 act at different stages of oogenesis to regulate TORC1 in order to control meiotic entry and promote oocyte growth and development. After exactly four mitotic cyst divisions, the GATOR1 complex members (Iml1, Nprl2 and Nprl3) down-regulate TORC1 to slow cellular metabolism and promote the mitotic/meiotic transition. At later stages of oogenesis, the mio and Nup44A components of the GATOR2 complex inhibit GATOR1 and thus activate TORC1 to promote meiotic progression, and drive oocyte growth and development. The chain is GATOR complex protein Iml1 from Drosophila melanogaster (Fruit fly).